The primary structure comprises 252 residues: Carbonic anhydrase (252 aa).

An N-terminal signal peptide occupies residues 1–26 (MPRFPRTLPRLTAVLLLACTAFSAAA). In terms of domain architecture, Alpha-carbonic anhydrase spans 31 to 252 (THWGYTGHDS…QPLNARVVIE (222 aa)). Cysteines 54 and 207 form a disulfide. Catalysis depends on His92, which acts as the Proton acceptor. Positions 118, 120, and 137 each coordinate Zn(2+). Substrate is bound at residue 203-204 (TT).

The protein belongs to the alpha-carbonic anhydrase family. As to quaternary structure, homodimer. Zn(2+) is required as a cofactor.

The protein resides in the periplasm. It catalyses the reaction hydrogencarbonate + H(+) = CO2 + H2O. Its function is as follows. Reversible hydration of carbon dioxide. The protein is Carbonic anhydrase (cah) of Neisseria gonorrhoeae.